The chain runs to 3470 residues: Dynein axonemal heavy chain 5 (3470 aa).

The tract at residues 1-1938 is stem; it reads MFRIGRRQLW…MIHITDVAFT (1938 aa). A disordered region spans residues 899–918; sequence EKVRHENASPNGDTSGGGEG. 4 AAA regions span residues 1939 to 2161, 2221 to 2440, 2547 to 2800, and 2913 to 3167; these read YQNE…VLRT, TAIS…IQNL, VYPP…IWQG, and LYNE…FRRS. ATP-binding positions include 1977–1984 and 2259–2266; these read GPAGTGKT and GPSGSGKT. 2 coiled-coil regions span residues 3207-3241 and 3434-3468; these read LKEA…VLKE and HALA…AMTE.

Belongs to the dynein heavy chain family. Interacts with DNAL1. Consists of at least two heavy chains and a number of intermediate and light chains.

It is found in the cytoplasm. The protein localises to the cytoskeleton. The protein resides in the cilium axoneme. In terms of biological role, force generating protein of respiratory cilia. Produces force towards the minus ends of microtubules. Dynein has ATPase activity; the force-producing power stroke is thought to occur on release of ADP. Required for structural and functional integrity of the cilia of ependymal cells lining the brain ventricles. In Rattus norvegicus (Rat), this protein is Dynein axonemal heavy chain 5.